The sequence spans 50 residues: Insulin 2 (50 aa).

Disulfide bonds link cysteine 8–cysteine 36, cysteine 20–cysteine 49, and cysteine 35–cysteine 40.

The protein belongs to the insulin family. As to quaternary structure, heterodimer of a B chain and an A chain linked by two disulfide bonds.

Its subcellular location is the secreted. In terms of biological role, insulin decreases blood glucose concentration. It increases cell permeability to monosaccharides, amino acids and fatty acids. It accelerates glycolysis, the pentose phosphate cycle, and glycogen synthesis in liver. This is Insulin 2 (ins2) from Batrachoididae sp. (Toadfish).